Consider the following 256-residue polypeptide: EF-hand calcium-binding domain-containing protein 4A (256 aa).

Over residues 1 to 10 the composition is skewed to basic residues; that stretch reads MAHLGSRRRM. The segment at 1 to 32 is disordered; it reads MAHLGSRRRMSPGLRTRIAHRKAHRTPPSPLI. EF-hand domains follow at residues 41–69 and 71–106; these read KAHE…QNEL and LTPE…LLGV. Positions 84, 86, 88, 90, and 95 each coordinate Ca(2+). A coiled-coil region spans residues 190-235; sequence IRDVHHEKDTLEQALKRKETDHGREVRCLYEEMEQQIKIERERLLK.

This sequence belongs to the EFCAB4 family.

In Xenopus tropicalis (Western clawed frog), this protein is EF-hand calcium-binding domain-containing protein 4A (cracr2b).